Consider the following 105-residue polypeptide: NADH-quinone oxidoreductase subunit K (105 aa).

3 consecutive transmembrane segments (helical) span residues 8 to 28 (VTNG…GIII), 33 to 53 (ILIL…NFLI), and 65 to 85 (VFVF…LAIV).

It belongs to the complex I subunit 4L family. As to quaternary structure, NDH-1 is composed of 14 different subunits. Subunits NuoA, H, J, K, L, M, N constitute the membrane sector of the complex.

It localises to the cell inner membrane. It catalyses the reaction a quinone + NADH + 5 H(+)(in) = a quinol + NAD(+) + 4 H(+)(out). Its function is as follows. NDH-1 shuttles electrons from NADH, via FMN and iron-sulfur (Fe-S) centers, to quinones in the respiratory chain. The immediate electron acceptor for the enzyme in this species is believed to be ubiquinone. Couples the redox reaction to proton translocation (for every two electrons transferred, four hydrogen ions are translocated across the cytoplasmic membrane), and thus conserves the redox energy in a proton gradient. The protein is NADH-quinone oxidoreductase subunit K of Francisella philomiragia subsp. philomiragia (strain ATCC 25017 / CCUG 19701 / FSC 153 / O#319-036).